We begin with the raw amino-acid sequence, 499 residues long: Lysine--tRNA ligase (499 aa).

Glu410 and Glu417 together coordinate Mg(2+).

This sequence belongs to the class-II aminoacyl-tRNA synthetase family. Homodimer. The cofactor is Mg(2+).

The protein resides in the cytoplasm. The catalysed reaction is tRNA(Lys) + L-lysine + ATP = L-lysyl-tRNA(Lys) + AMP + diphosphate. The sequence is that of Lysine--tRNA ligase (lysS) from Bacillus subtilis (strain 168).